The primary structure comprises 175 residues: Coagulogen (175 aa).

8 disulfides stabilise this stretch: Cys-8–Cys-167, Cys-10–Cys-95, Cys-60–Cys-161, Cys-65–Cys-121, Cys-75–Cys-168, Cys-88–Cys-140, Cys-127–Cys-170, and Cys-134–Cys-172.

It belongs to the coagulin family. As to quaternary structure, coagulogen is cleaved after Arg-18 and Arg-46 by a clotting enzyme contained in the hemocyte and activated by a bacterial endotoxin (lipopolysaccharide). This cleavage releases the peptide C and leaves 2 chains of coagulin, A and B, linked by two disulfide bonds. Coagulin molecules interlink to form a gel. Hemolymph.

Its subcellular location is the secreted. Coagulogen is a gel-forming protein of hemolymph; it hinders the spread of invaders by immobilizing them. This Carcinoscorpius rotundicauda (Mangrove horseshoe crab) protein is Coagulogen.